Here is a 228-residue protein sequence, read N- to C-terminus: Small ribosomal subunit protein uS3 (228 aa).

Residues 39-107 (VREYLQDKLK…PVHINIEEIR (69 aa)) enclose the KH type-2 domain.

Belongs to the universal ribosomal protein uS3 family. As to quaternary structure, part of the 30S ribosomal subunit. Forms a tight complex with proteins S10 and S14.

Binds the lower part of the 30S subunit head. Binds mRNA in the 70S ribosome, positioning it for translation. The chain is Small ribosomal subunit protein uS3 from Pseudomonas aeruginosa (strain UCBPP-PA14).